The primary structure comprises 376 residues: Ribonuclease D (376 aa).

In terms of domain architecture, 3'-5' exonuclease spans 8–176; it reads IQWIRDDASL…VYLALDARLS (169 aa). The HRDC domain maps to 214 to 294; the sequence is RPQQLAVLRE…AEAARLPQSE (81 aa).

It belongs to the RNase D family. A divalent metal cation is required as a cofactor.

The protein localises to the cytoplasm. The enzyme catalyses Exonucleolytic cleavage that removes extra residues from the 3'-terminus of tRNA to produce 5'-mononucleotides.. Exonuclease involved in the 3' processing of various precursor tRNAs. Initiates hydrolysis at the 3'-terminus of an RNA molecule and releases 5'-mononucleotides. This chain is Ribonuclease D, found in Pseudomonas paraeruginosa (strain DSM 24068 / PA7) (Pseudomonas aeruginosa (strain PA7)).